The primary structure comprises 298 residues: Phosphatidylserine decarboxylase proenzyme (298 aa).

Residues Asp113, His169, and Ser256 each act as charge relay system; for autoendoproteolytic cleavage activity in the active site. Ser256 serves as the catalytic Schiff-base intermediate with substrate; via pyruvic acid; for decarboxylase activity. Ser256 bears the Pyruvic acid (Ser); by autocatalysis mark.

Belongs to the phosphatidylserine decarboxylase family. PSD-B subfamily. Prokaryotic type II sub-subfamily. As to quaternary structure, heterodimer of a large membrane-associated beta subunit and a small pyruvoyl-containing alpha subunit. The cofactor is pyruvate. Is synthesized initially as an inactive proenzyme. Formation of the active enzyme involves a self-maturation process in which the active site pyruvoyl group is generated from an internal serine residue via an autocatalytic post-translational modification. Two non-identical subunits are generated from the proenzyme in this reaction, and the pyruvate is formed at the N-terminus of the alpha chain, which is derived from the carboxyl end of the proenzyme. The autoendoproteolytic cleavage occurs by a canonical serine protease mechanism, in which the side chain hydroxyl group of the serine supplies its oxygen atom to form the C-terminus of the beta chain, while the remainder of the serine residue undergoes an oxidative deamination to produce ammonia and the pyruvoyl prosthetic group on the alpha chain. During this reaction, the Ser that is part of the protease active site of the proenzyme becomes the pyruvoyl prosthetic group, which constitutes an essential element of the active site of the mature decarboxylase.

It is found in the cell membrane. It catalyses the reaction a 1,2-diacyl-sn-glycero-3-phospho-L-serine + H(+) = a 1,2-diacyl-sn-glycero-3-phosphoethanolamine + CO2. Its pathway is phospholipid metabolism; phosphatidylethanolamine biosynthesis; phosphatidylethanolamine from CDP-diacylglycerol: step 2/2. Functionally, catalyzes the formation of phosphatidylethanolamine (PtdEtn) from phosphatidylserine (PtdSer). In Desulfitobacterium hafniense (strain Y51), this protein is Phosphatidylserine decarboxylase proenzyme.